The sequence spans 627 residues: Sister chromatid cohesion 1 protein 1 (627 aa).

Disordered stretches follow at residues 211 to 294 (GDDE…TATS), 395 to 416 (MHNH…NLDS), and 461 to 510 (GDDV…VAEE). Basic and acidic residues-rich tracts occupy residues 254-263 (EQQENRRDGF), 272-282 (IPDKEEHDRPQ), and 395-408 (MHNH…ERSD). Polar residues predominate over residues 467-487 (MPSTPSARGAASINNIEISSK).

It belongs to the rad21 family. In terms of assembly, component of the cohesin complex. In terms of tissue distribution, isoform 2 is expressed at low levels in buds, leaves and roots, whereas expression of isoform 1 is confined to buds.

Its subcellular location is the nucleus. Involved in chromosome condensation, pairing and segregation during meiosis. Responsible for cohesion between replicated sister chromatids. The chain is Sister chromatid cohesion 1 protein 1 (SYN1) from Arabidopsis thaliana (Mouse-ear cress).